The sequence spans 76 residues: Putative UPF0377 protein YGL260W (76 aa).

This sequence belongs to the UPF0377 family.

This chain is Putative UPF0377 protein YGL260W, found in Saccharomyces cerevisiae (strain ATCC 204508 / S288c) (Baker's yeast).